A 122-amino-acid chain; its full sequence is Small ribosomal subunit protein uS12c (122 aa).

This sequence belongs to the universal ribosomal protein uS12 family. In terms of assembly, part of the 30S ribosomal subunit.

The protein localises to the plastid. Its subcellular location is the chloroplast. In terms of biological role, with S4 and S5 plays an important role in translational accuracy. Located at the interface of the 30S and 50S subunits. This chain is Small ribosomal subunit protein uS12c (rps12), found in Illicium oligandrum (Star anise).